We begin with the raw amino-acid sequence, 267 residues long: 3-methyl-2-oxobutanoate hydroxymethyltransferase (267 aa).

Residues Asp46 and Asp85 each coordinate Mg(2+). Residues 46 to 47, Asp85, and Lys115 each bind 3-methyl-2-oxobutanoate; that span reads DS. Residue Glu117 coordinates Mg(2+). Catalysis depends on Glu184, which acts as the Proton acceptor.

This sequence belongs to the PanB family. As to quaternary structure, homodecamer; pentamer of dimers. Requires Mg(2+) as cofactor.

The protein localises to the cytoplasm. It carries out the reaction 3-methyl-2-oxobutanoate + (6R)-5,10-methylene-5,6,7,8-tetrahydrofolate + H2O = 2-dehydropantoate + (6S)-5,6,7,8-tetrahydrofolate. It functions in the pathway cofactor biosynthesis; (R)-pantothenate biosynthesis; (R)-pantoate from 3-methyl-2-oxobutanoate: step 1/2. Catalyzes the reversible reaction in which hydroxymethyl group from 5,10-methylenetetrahydrofolate is transferred onto alpha-ketoisovalerate to form ketopantoate. The polypeptide is 3-methyl-2-oxobutanoate hydroxymethyltransferase (Geobacter metallireducens (strain ATCC 53774 / DSM 7210 / GS-15)).